The primary structure comprises 841 residues: Follistatin-related protein 4 (841 aa).

A signal peptide spans 1-22 (MKPGGFWPHLALLGVSLPAVLG). Residues 29–54 (SRSPNMVPGESQAEETRGFEVTRREG) are disordered. Residues 42 to 54 (EETRGFEVTRREG) show a composition bias toward basic and acidic residues. The region spanning 80 to 134 (TTGQPSCQCLEVCRPRYMPVCGSDGRLYGNHCELRRAACLLGKRIVSVHSKDCFL) is the Kazal-like domain. 3 disulfides stabilise this stretch: Cys-86–Cys-118, Cys-92–Cys-111, and Cys-100–Cys-132. 2 EF-hand domains span residues 173–208 (QKRLLVESLFKDLDADGNGHLGSLELAQYVLKEQDM) and 225–247 (DYNSDGSLTLGEFYTAFQVIQLS). Residues Asp-186, Asp-188, Asn-190, His-192, Glu-197, Asp-225, Asn-227, Asp-229, Ser-231, and Glu-236 each contribute to the Ca(2+) site. Ig-like domains follow at residues 250–336 (PEDK…VLQV) and 340–425 (PVIR…EDIS). Intrachain disulfides connect Cys-269–Cys-320 and Cys-361–Cys-412. A glycan (N-linked (GlcNAc...) asparagine) is linked at Asn-317.

It is found in the secreted. This chain is Follistatin-related protein 4 (Fstl4), found in Mus musculus (Mouse).